The primary structure comprises 284 residues: D-tagatose-1,6-bisphosphate aldolase subunit GatY (284 aa).

Catalysis depends on Asp82, which acts as the Proton donor. Zn(2+) is bound by residues His83 and His180. Gly181 is a binding site for dihydroxyacetone phosphate. His208 contacts Zn(2+). Dihydroxyacetone phosphate contacts are provided by residues 209–211 and 230–233; these read GAS and NVAT.

This sequence belongs to the class II fructose-bisphosphate aldolase family. TagBP aldolase GatY subfamily. In terms of assembly, forms a complex with GatZ. Zn(2+) is required as a cofactor.

The enzyme catalyses D-tagatofuranose 1,6-bisphosphate = D-glyceraldehyde 3-phosphate + dihydroxyacetone phosphate. It functions in the pathway carbohydrate metabolism; D-tagatose 6-phosphate degradation; D-glyceraldehyde 3-phosphate and glycerone phosphate from D-tagatose 6-phosphate: step 2/2. In terms of biological role, catalytic subunit of the tagatose-1,6-bisphosphate aldolase GatYZ, which catalyzes the reversible aldol condensation of dihydroxyacetone phosphate (DHAP or glycerone-phosphate) with glyceraldehyde 3-phosphate (G3P) to produce tagatose 1,6-bisphosphate (TBP). Requires GatZ subunit for full activity and stability. Is involved in the catabolism of galactitol. The chain is D-tagatose-1,6-bisphosphate aldolase subunit GatY from Salmonella typhi.